A 346-amino-acid polypeptide reads, in one-letter code: NADH-ubiquinone oxidoreductase chain 2 (346 aa).

The next 10 membrane-spanning stretches (helical) occupy residues 3-23 (PIIF…VMIS), 25-45 (HWLL…PIMM), 67-87 (SMLL…WTVM), 96-116 (MLMT…FWVP), 122-142 (IPLS…MSVL), 145-165 (IFPS…ILIG), 200-220 (TLLN…MFMA), 238-258 (IMTI…PLSG), 273-293 (NSII…YFYM), and 324-344 (FLPT…MLSV).

Belongs to the complex I subunit 2 family. Core subunit of respiratory chain NADH dehydrogenase (Complex I) which is composed of 45 different subunits. Interacts with TMEM242.

The protein localises to the mitochondrion inner membrane. It catalyses the reaction a ubiquinone + NADH + 5 H(+)(in) = a ubiquinol + NAD(+) + 4 H(+)(out). Its function is as follows. Core subunit of the mitochondrial membrane respiratory chain NADH dehydrogenase (Complex I) which catalyzes electron transfer from NADH through the respiratory chain, using ubiquinone as an electron acceptor. Essential for the catalytic activity and assembly of complex I. This Bos mutus grunniens (Wild yak) protein is NADH-ubiquinone oxidoreductase chain 2.